The sequence spans 284 residues: Homeobox protein SIX1 (284 aa).

The segment at residues 124–183 is a DNA-binding region (homeobox); it reads GEETSYCFKEKSRGVLREWYAHNPYPSPREKRELAEATGLTTTQVSNWFKNRRQRDRAAE. Residues 168–269 are disordered; sequence VSNWFKNRRQ…LQTHQHQLQD (102 aa). Positions 179 to 190 are enriched in basic and acidic residues; sequence DRAAEAKERENT. Polar residues predominate over residues 242–269; that stretch reads RSSNYSLPGLTASQPSHGLQTHQHQLQD.

It belongs to the SIX/Sine oculis homeobox family. As to quaternary structure, interacts with DACH1. Interacts with EYA1. Interacts with EYA2. Interacts with CDH1. Interacts with TBX18. Interacts with CEBPA. Interacts with CEBPB. Interacts with EBF2. Phosphorylated during interphase; becomes hyperphosphorylated during mitosis. Hyperphosphorylation impairs binding to promoter elements. In terms of processing, ubiquitinated by the anaphase promoting complex (APC), leading to its proteasomal degradation. In terms of tissue distribution, specifically expressed in skeletal muscle.

It localises to the nucleus. The protein localises to the cytoplasm. Functionally, transcription factor that is involved in the regulation of cell proliferation, apoptosis and embryonic development. Plays an important role in the development of several organs, including kidney, muscle and inner ear. Depending on context, functions as a transcriptional repressor or activator. Lacks an activation domain, and requires interaction with EYA family members for transcription activation. Mediates nuclear translocation of EYA1 and EYA2. Binds the 5'-TCA[AG][AG]TTNC-3' motif present in the MEF3 element in the MYOG promoter and CIDEA enhancer. Regulates the expression of numerous genes, including MYC, CCND1 and EZR. Acts as an activator of the IGFBP5 promoter, probably coactivated by EYA2. Repression of precursor cell proliferation in myoblasts is switched to activation through recruitment of EYA3 to the SIX1-DACH1 complex. During myogenesis, seems to act together with EYA2 and DACH2. Regulates the expression of CCNA1. Promotes brown adipocyte differentiation. This Homo sapiens (Human) protein is Homeobox protein SIX1 (SIX1).